A 201-amino-acid chain; its full sequence is dTTP/UTP pyrophosphatase (201 aa).

Asp-76 acts as the Proton acceptor in catalysis.

It belongs to the Maf family. YhdE subfamily. A divalent metal cation serves as cofactor.

It is found in the cytoplasm. The catalysed reaction is dTTP + H2O = dTMP + diphosphate + H(+). It catalyses the reaction UTP + H2O = UMP + diphosphate + H(+). Functionally, nucleoside triphosphate pyrophosphatase that hydrolyzes dTTP and UTP. May have a dual role in cell division arrest and in preventing the incorporation of modified nucleotides into cellular nucleic acids. In Neisseria meningitidis serogroup A / serotype 4A (strain DSM 15465 / Z2491), this protein is dTTP/UTP pyrophosphatase.